The sequence spans 140 residues: Large ribosomal subunit protein uL11 (140 aa).

This sequence belongs to the universal ribosomal protein uL11 family. In terms of assembly, part of the ribosomal stalk of the 50S ribosomal subunit. Interacts with L10 and the large rRNA to form the base of the stalk. L10 forms an elongated spine to which L12 dimers bind in a sequential fashion forming a multimeric L10(L12)X complex. One or more lysine residues are methylated.

In terms of biological role, forms part of the ribosomal stalk which helps the ribosome interact with GTP-bound translation factors. The polypeptide is Large ribosomal subunit protein uL11 (Symbiobacterium thermophilum (strain DSM 24528 / JCM 14929 / IAM 14863 / T)).